A 632-amino-acid polypeptide reads, in one-letter code: PWWP domain-containing protein 5 (632 aa).

Positions 97–158 (DSDLVWAKLR…ASQIKPFHQN (62 aa)) constitute a PWWP domain. Residues 310–452 (RKTDYKDNAE…AERKISSPDE (143 aa)) form a disordered region. Composition is skewed to basic and acidic residues over residues 313–326 (DYKD…EKTL), 339–364 (STEK…GKSE), 371–383 (QQKE…HSNE), and 425–449 (KSTE…KISS). A Nuclear localization signal motif is present at residues 352–359 (KRKVESSE).

Belongs to the PDP family. As to quaternary structure, component of the PRC2 (polycomb repressive complex 2) complex which regulates histone methylation on histone H3K27.

It is found in the nucleus. May influence gene expression by regulating the function of the PRC2 complex and modulating H3K27me3 level. This Arabidopsis thaliana (Mouse-ear cress) protein is PWWP domain-containing protein 5.